Consider the following 280-residue polypeptide: Protein IMPACT homolog (280 aa).

Residues 9-109 (DELLALESIY…QAAAERESKL (101 aa)) form the RWD domain.

It belongs to the IMPACT family. As to quaternary structure, interacts (via N-terminus) with gcn1 (via C-terminus); this interaction reduces the gcn1-gcn20 complex formation and prevents the interaction of gcn1 with gcn2 protein kinase and gcn2 activation in amino acid-starved cells. Interacts (via C-terminus) with act1; this interaction occurs in a gcn1-independent manner. Interacts with rpl39; this interaction occurs in a gcn1-independent manner. Associates (via middle region) with ribosomes; this association occurs in a gcn1-independent manner and persists under amino acid starvation conditions.

Its subcellular location is the cytoplasm. It localises to the nucleus. Functionally, translational regulator that ensures constant high levels of translation under amino acid starvation. Plays a role as a negative regulator of the gcn2 kinase activity; impairs gcn1-mediated gcn2 activation, and hence gcn2-mediated eIF-2-alpha phosphorylation in amino acid-starved cells and subsequent down-regulation of protein synthesis. In normal conditions, it resides in a actin complex and has no activity. The protein is Protein IMPACT homolog (yih1) of Schizosaccharomyces pombe (strain 972 / ATCC 24843) (Fission yeast).